The sequence spans 702 residues: Ribosomal RNA large subunit methyltransferase K/L (702 aa).

Residues 43–154 (LVYQSLMWSR…KETASIALDL (112 aa)) form the THUMP domain.

This sequence belongs to the methyltransferase superfamily. RlmKL family.

It localises to the cytoplasm. It carries out the reaction guanosine(2445) in 23S rRNA + S-adenosyl-L-methionine = N(2)-methylguanosine(2445) in 23S rRNA + S-adenosyl-L-homocysteine + H(+). The catalysed reaction is guanosine(2069) in 23S rRNA + S-adenosyl-L-methionine = N(2)-methylguanosine(2069) in 23S rRNA + S-adenosyl-L-homocysteine + H(+). Specifically methylates the guanine in position 2445 (m2G2445) and the guanine in position 2069 (m7G2069) of 23S rRNA. This is Ribosomal RNA large subunit methyltransferase K/L from Escherichia coli O139:H28 (strain E24377A / ETEC).